Consider the following 568-residue polypeptide: Urease subunit alpha (568 aa).

In terms of domain architecture, Urease spans 130 to 568 (GGIDTHIHFI…LPMAQRYFLF (439 aa)). Positions 135, 137, and 218 each coordinate Ni(2+). Lys-218 carries the N6-carboxylysine modification. Position 220 (His-220) interacts with substrate. His-247 and His-273 together coordinate Ni(2+). The active-site Proton donor is the His-321. Residue Asp-361 coordinates Ni(2+).

It belongs to the metallo-dependent hydrolases superfamily. Urease alpha subunit family. In terms of assembly, heterotrimer of UreA (gamma), UreB (beta) and UreC (alpha) subunits. Three heterotrimers associate to form the active enzyme. The cofactor is Ni cation. In terms of processing, carboxylation allows a single lysine to coordinate two nickel ions.

It localises to the cytoplasm. The enzyme catalyses urea + 2 H2O + H(+) = hydrogencarbonate + 2 NH4(+). It functions in the pathway nitrogen metabolism; urea degradation; CO(2) and NH(3) from urea (urease route): step 1/1. The chain is Urease subunit alpha from Burkholderia cenocepacia (strain ATCC BAA-245 / DSM 16553 / LMG 16656 / NCTC 13227 / J2315 / CF5610) (Burkholderia cepacia (strain J2315)).